We begin with the raw amino-acid sequence, 451 residues long: NADH-quinone oxidoreductase subunit H (451 aa).

9 helical membrane passes run 30–50 (LIIVKTLGVFAFLVLATLFMI), 98–118 (AVFILAPVISATPAFLAFAVI), 138–158 (LPVAVLFVLAMSSLGVYGIVL), 176–196 (AAQVVSYEIAMGLSFVGVFLY), 213–233 (WGILWAGVSFAVYAIAMVGET), 262–282 (LFYLAEYINMVTVSALMTTLF), 302–322 (WWPVLWFLIKLGIVLFVFIWL), 336–356 (QFGWKVLIPVNLTWILVEAAI), and 368–388 (VIPFAIFLALVAVGTYVADLV).

This sequence belongs to the complex I subunit 1 family. As to quaternary structure, NDH-1 is composed of 14 different subunits. Subunits NuoA, H, J, K, L, M, N constitute the membrane sector of the complex.

Its subcellular location is the cell membrane. It carries out the reaction a quinone + NADH + 5 H(+)(in) = a quinol + NAD(+) + 4 H(+)(out). In terms of biological role, NDH-1 shuttles electrons from NADH, via FMN and iron-sulfur (Fe-S) centers, to quinones in the respiratory chain. The immediate electron acceptor for the enzyme in this species is believed to be ubiquinone. Couples the redox reaction to proton translocation (for every two electrons transferred, four hydrogen ions are translocated across the cytoplasmic membrane), and thus conserves the redox energy in a proton gradient. This subunit may bind ubiquinone. In Acidothermus cellulolyticus (strain ATCC 43068 / DSM 8971 / 11B), this protein is NADH-quinone oxidoreductase subunit H.